A 33-amino-acid polypeptide reads, in one-letter code: Alpha-amanitin proprotein (33 aa).

Positions 1 to 10 are excised as a propeptide; it reads MSDINATRLP. Isoleucine 11 is subject to (3R,4R)-4,5-dihydroxyisoleucine; in form alpha-amanitin. Isoleucine 11 carries the post-translational modification (3R,4S)-4-hydroxyisoleucine; in form gamma-amanitin. Positions 11–18 form a cross-link, cyclopeptide (Ile-Pro); it reads IWGIGCNP. Positions 12–16 form a cross-link, 2'-cysteinyl-6'-hydroxytryptophan sulfoxide (Trp-Cys); sequence WGIGC. Position 18 is a 4-hydroxyproline (proline 18). Positions 19 to 33 are excised as a propeptide; that stretch reads SVGDEVTALLTSGEA.

It belongs to the MSDIN fungal toxin family. Post-translationally, processed by the macrocyclase-peptidase enzyme POPB to yield a toxic cyclic decapeptide. POPB first removes 10 residues from the N-terminus. Conformational trapping of the remaining peptide forces the enzyme to release this intermediate rather than proceed to macrocyclization. The enzyme rebinds the remaining peptide in a different conformation and catalyzes macrocyclization of the N-terminal 8 residues.

Its function is as follows. Major toxin belonging to the bicyclic octapeptides amatoxins that acts by binding non-competitively to RNA polymerase II and greatly slowing the elongation of transcripts from target promoters. The protein is Alpha-amanitin proprotein of Amanita fuliginea (East Asian brown death cap).